Consider the following 739-residue polypeptide: UPF0313 protein YgiQ (739 aa).

The Radical SAM core domain maps to 372 to 650 (AYEMIRFSVN…KALLRYHDPA (279 aa)). Residues cysteine 386, cysteine 390, and cysteine 393 each contribute to the [4Fe-4S] cluster site. A disordered region spans residues 686 to 739 (EARRQNRNTRPALTKHTPMATQCQTPATAKKASSTQSRPVNAGAKKRPKAAVGR). Residues 704 to 724 (MATQCQTPATAKKASSTQSRP) show a composition bias toward polar residues. The segment covering 729 to 739 (AKKRPKAAVGR) has biased composition (basic residues).

Belongs to the UPF0313 family. The cofactor is [4Fe-4S] cluster.

This chain is UPF0313 protein YgiQ, found in Escherichia coli O157:H7.